The primary structure comprises 314 residues: uncharacterized protein (314 aa).

A signal peptide spans 1–20; sequence MKKRAGIWAALLLAAVMLAG. Residue C21 is the site of N-palmitoyl cysteine attachment. C21 carries the S-diacylglycerol cysteine lipid modification. The 253-residue stretch at 59-311 folds into the Fe/B12 periplasmic-binding domain; it reads KIVSLMPSNT…ELAESIYPDT (253 aa).

This sequence belongs to the bacterial solute-binding protein 8 family. The complex is composed of two ATP-binding proteins (YvrA), two transmembrane proteins (YvrB) and a solute-binding protein (YvrC).

It is found in the cell membrane. Functionally, probably part of an ABC transporter complex. This is an uncharacterized protein from Bacillus subtilis (strain 168).